The sequence spans 141 residues: Hemoglobin subunit alpha-A (141 aa).

The region spanning Val1–Arg141 is the Globin domain. Residue His58 coordinates O2. His87 contacts heme b.

This sequence belongs to the globin family. As to quaternary structure, heterotetramer of two alpha chains and two beta chains. Red blood cells.

Functionally, involved in oxygen transport from the lung to the various peripheral tissues. The polypeptide is Hemoglobin subunit alpha-A (HBAA) (Turdus merula (Common blackbird)).